The following is a 122-amino-acid chain: Large ribosomal subunit protein uL14 (122 aa).

It belongs to the universal ribosomal protein uL14 family. In terms of assembly, part of the 50S ribosomal subunit. Forms a cluster with proteins L3 and L19. In the 70S ribosome, L14 and L19 interact and together make contacts with the 16S rRNA in bridges B5 and B8.

Functionally, binds to 23S rRNA. Forms part of two intersubunit bridges in the 70S ribosome. This is Large ribosomal subunit protein uL14 from Idiomarina loihiensis (strain ATCC BAA-735 / DSM 15497 / L2-TR).